The primary structure comprises 373 residues: Dual-specificity RNA methyltransferase RlmN (373 aa).

The active-site Proton acceptor is the Glu-94. The 240-residue stretch at 100–339 folds into the Radical SAM core domain; it reads EDDRATLCVS…VIVRKTRGDD (240 aa). Cys-107 and Cys-344 form a disulfide bridge. [4Fe-4S] cluster is bound by residues Cys-114, Cys-118, and Cys-121. Residues 168-169, Ser-200, 222-224, and Asn-301 each bind S-adenosyl-L-methionine; these read GE and SIH. The S-methylcysteine intermediate role is filled by Cys-344.

The protein belongs to the radical SAM superfamily. RlmN family. [4Fe-4S] cluster is required as a cofactor.

The protein resides in the cytoplasm. It catalyses the reaction adenosine(2503) in 23S rRNA + 2 reduced [2Fe-2S]-[ferredoxin] + 2 S-adenosyl-L-methionine = 2-methyladenosine(2503) in 23S rRNA + 5'-deoxyadenosine + L-methionine + 2 oxidized [2Fe-2S]-[ferredoxin] + S-adenosyl-L-homocysteine. The catalysed reaction is adenosine(37) in tRNA + 2 reduced [2Fe-2S]-[ferredoxin] + 2 S-adenosyl-L-methionine = 2-methyladenosine(37) in tRNA + 5'-deoxyadenosine + L-methionine + 2 oxidized [2Fe-2S]-[ferredoxin] + S-adenosyl-L-homocysteine. In terms of biological role, specifically methylates position 2 of adenine 2503 in 23S rRNA and position 2 of adenine 37 in tRNAs. m2A2503 modification seems to play a crucial role in the proofreading step occurring at the peptidyl transferase center and thus would serve to optimize ribosomal fidelity. This Shewanella sp. (strain ANA-3) protein is Dual-specificity RNA methyltransferase RlmN.